Reading from the N-terminus, the 525-residue chain is GMP synthase [glutamine-hydrolyzing] (525 aa).

The region spanning 8–207 (KILILDFGSQ…ALEICGCPAN (200 aa)) is the Glutamine amidotransferase type-1 domain. The active-site Nucleophile is the Cys-85. Catalysis depends on residues His-181 and Glu-183. Positions 208-400 (WKPSSIIEDA…LGLPYDMLYR (193 aa)) constitute a GMPS ATP-PPase domain. 235-241 (SGGVDSS) serves as a coordination point for ATP.

As to quaternary structure, homodimer.

The catalysed reaction is XMP + L-glutamine + ATP + H2O = GMP + L-glutamate + AMP + diphosphate + 2 H(+). The protein operates within purine metabolism; GMP biosynthesis; GMP from XMP (L-Gln route): step 1/1. In terms of biological role, catalyzes the synthesis of GMP from XMP. The polypeptide is GMP synthase [glutamine-hydrolyzing] (Shewanella pealeana (strain ATCC 700345 / ANG-SQ1)).